Consider the following 417-residue polypeptide: DNA primase DnaG (417 aa).

Residues 171–257 (DAIIIVEGRA…SVEDMARKEI (87 aa)) form the Toprim domain. Glu-177, Asp-219, and Asp-221 together coordinate Mg(2+). A disordered region spans residues 278-325 (VPGEKRTQDLRPQKPGASEQNSIKKENVENENESTPTSFEPISEPAPP). Residues 279–289 (PGEKRTQDLRP) show a composition bias toward basic and acidic residues.

Belongs to the archaeal DnaG primase family. In terms of assembly, forms a ternary complex with MCM helicase and DNA. Mg(2+) serves as cofactor.

It catalyses the reaction ssDNA + n NTP = ssDNA/pppN(pN)n-1 hybrid + (n-1) diphosphate.. In terms of biological role, RNA polymerase that catalyzes the synthesis of short RNA molecules used as primers for DNA polymerase during DNA replication. The protein is DNA primase DnaG of Methanosphaerula palustris (strain ATCC BAA-1556 / DSM 19958 / E1-9c).